A 449-amino-acid chain; its full sequence is Trigger factor (449 aa).

In terms of domain architecture, PPIase FKBP-type spans 172–257 (GDRVTVDFVG…LKQVEWAHLP (86 aa)).

The protein belongs to the FKBP-type PPIase family. Tig subfamily.

The protein localises to the cytoplasm. It carries out the reaction [protein]-peptidylproline (omega=180) = [protein]-peptidylproline (omega=0). Its function is as follows. Involved in protein export. Acts as a chaperone by maintaining the newly synthesized protein in an open conformation. Functions as a peptidyl-prolyl cis-trans isomerase. The polypeptide is Trigger factor (Ralstonia nicotianae (strain ATCC BAA-1114 / GMI1000) (Ralstonia solanacearum)).